A 416-amino-acid polypeptide reads, in one-letter code: Exodeoxyribonuclease 7 large subunit (416 aa).

Belongs to the XseA family. In terms of assembly, heterooligomer composed of large and small subunits.

The protein localises to the cytoplasm. It catalyses the reaction Exonucleolytic cleavage in either 5'- to 3'- or 3'- to 5'-direction to yield nucleoside 5'-phosphates.. In terms of biological role, bidirectionally degrades single-stranded DNA into large acid-insoluble oligonucleotides, which are then degraded further into small acid-soluble oligonucleotides. The chain is Exodeoxyribonuclease 7 large subunit from Sulfurimonas denitrificans (strain ATCC 33889 / DSM 1251) (Thiomicrospira denitrificans (strain ATCC 33889 / DSM 1251)).